Here is a 108-residue protein sequence, read N- to C-terminus: UPF0235 protein APE_0182.1 (108 aa).

The protein belongs to the UPF0235 family.

The protein is UPF0235 protein APE_0182.1 of Aeropyrum pernix (strain ATCC 700893 / DSM 11879 / JCM 9820 / NBRC 100138 / K1).